The primary structure comprises 501 residues: Ribose import ATP-binding protein RbsA (501 aa).

ABC transporter domains lie at 5 to 241 (LQLK…VGRK) and 252 to 495 (APGD…VGKL). ATP is bound at residue 37–44 (GENGAGKS).

The protein belongs to the ABC transporter superfamily. Ribose importer (TC 3.A.1.2.1) family. In terms of assembly, the complex is composed of an ATP-binding protein (RbsA), two transmembrane proteins (RbsC) and a solute-binding protein (RbsB).

The protein localises to the cell inner membrane. It carries out the reaction D-ribose(out) + ATP + H2O = D-ribose(in) + ADP + phosphate + H(+). Part of the ABC transporter complex RbsABC involved in ribose import. Responsible for energy coupling to the transport system. The sequence is that of Ribose import ATP-binding protein RbsA from Escherichia coli O6:H1 (strain CFT073 / ATCC 700928 / UPEC).